Reading from the N-terminus, the 136-residue chain is Salivary protein 15 Iric-2 (136 aa).

The N-terminal stretch at 1-22 (MESFVAMKVVCIVLLFVIAAEA) is a signal peptide. N-linked (GlcNAc...) asparagine glycosylation is present at Asn105. Positions 117–136 (GPKNQTCENKDQCVPHIPGC) are CD4-binding.

Belongs to the salp15 family. In terms of assembly, interacts with host CD4. Interacts with host DC-SIGN (CD209). Interacts with Borrelia outer surface protein C (OspC). As to expression, expressed in salivary glands. Detected in fed adult female.

It is found in the secreted. In terms of biological role, salivary tick protein that downregulates host immune system by binding to both dendritic cells, and CD4(+) T cells. Specifically binds to the CD4 coreceptor on T cells. This interaction prevents the activation of the Src kinase, Lck, and its downstream substrate Zap-70, and results in deficient activation of PLCgamma1, the repression of calcium fluxes triggered by T-cell antigen receptor (TCR) ligation, and a subsequent reduction in interleukin-2 production. This salivary protein also binds to DC-SIGN (CD209) on dendritic cells (DC) and activates the Raf-1 kinase/MEK signaling pathway that results in down-regulating expression of pro-inflammatory cytokines. Furthermore, it inhibits T cell proliferation induced by DCs. In addition, it inhibits in vitro keratinocyte inflammation induced by Borrelia burgdorferi or by the major outer surface protein (OspC) of Borrelia. In addition, it downregulates chemokines and monocyte chemoattractant protein 1, as well as several antimicrobial peptides such as defensins, cathelicidin, psoriasin, and RNase 7. Apart from its immunomodulatory activities, it is also associated with protection of Borrelia spirochetes from antibody-mediated killing through its binding to OspC. In vivo, tests on different immune disease animal models show promising therapeutic results, e.g., in inhibiting HIV infection, experimental autoimmune encephalomyelitis, transplantation rejection, and asthma. This chain is Salivary protein 15 Iric-2, found in Ixodes ricinus (Common tick).